The chain runs to 100 residues: Thioredoxin (100 aa).

The 100-residue stretch at 1–100 (MKHITNKAEL…PKNELKELLK (100 aa)) folds into the Thioredoxin domain. C29 and C32 form a disulfide bridge.

Belongs to the thioredoxin family.

Participates in various redox reactions through the reversible oxidation of its active center dithiol to a disulfide and catalyzes dithiol-disulfide exchange reactions. The polypeptide is Thioredoxin (trxA) (Mycoplasmoides gallisepticum (strain R(low / passage 15 / clone 2)) (Mycoplasma gallisepticum)).